Reading from the N-terminus, the 378-residue chain is Flap endonuclease 1 (378 aa).

An N-domain region spans residues 1–104 (MGVKDLSKVI…SELEKRTERR (104 aa)). A Mg(2+)-binding site is contributed by Asp-34. The DNA site is built by Arg-47 and Arg-70. Mg(2+) is bound at residue Asp-86. Positions 90 to 113 (PQMKTSELEKRTERRTEAEKQRND) are disordered. The segment covering 95 to 113 (SELEKRTERRTEAEKQRND) has biased composition (basic and acidic residues). An I-domain region spans residues 122-253 (SVNKFEKRLV…KKAFELIKKY (132 aa)). Mg(2+)-binding residues include Glu-158, Glu-160, Asp-179, and Asp-181. A DNA-binding site is contributed by Glu-158. Positions 231 and 233 each coordinate DNA. A Mg(2+)-binding site is contributed by Asp-233. The interval 336 to 344 (QQARIDSFF) is interaction with PCNA. The disordered stretch occupies residues 348-378 (KVVTSETTKRKNEEKNNLKKRGPSLGKKAKK). Over residues 354-364 (TTKRKNEEKNN) the composition is skewed to basic and acidic residues. The span at 365 to 378 (LKKRGPSLGKKAKK) shows a compositional bias: basic residues.

It belongs to the XPG/RAD2 endonuclease family. FEN1 subfamily. In terms of assembly, interacts with PCNA. Three molecules of FEN1 bind to one PCNA trimer with each molecule binding to one PCNA monomer. PCNA stimulates the nuclease activity without altering cleavage specificity. Mg(2+) serves as cofactor. Post-translationally, phosphorylated. Phosphorylation upon DNA damage induces relocalization to the nuclear plasma.

It is found in the nucleus. Its subcellular location is the nucleolus. The protein localises to the nucleoplasm. It localises to the mitochondrion. Functionally, structure-specific nuclease with 5'-flap endonuclease and 5'-3' exonuclease activities involved in DNA replication and repair. During DNA replication, cleaves the 5'-overhanging flap structure that is generated by displacement synthesis when DNA polymerase encounters the 5'-end of a downstream Okazaki fragment. It enters the flap from the 5'-end and then tracks to cleave the flap base, leaving a nick for ligation. Also involved in the long patch base excision repair (LP-BER) pathway, by cleaving within the apurinic/apyrimidinic (AP) site-terminated flap. Acts as a genome stabilization factor that prevents flaps from equilibrating into structures that lead to duplications and deletions. Also possesses 5'-3' exonuclease activity on nicked or gapped double-stranded DNA, and exhibits RNase H activity. Also involved in replication and repair of rDNA and in repairing mitochondrial DNA. The polypeptide is Flap endonuclease 1 (Brugia malayi (Filarial nematode worm)).